Consider the following 601-residue polypeptide: Transcription factor Ken (601 aa).

The 69-residue stretch at 33 to 101 folds into the BTB domain; it reads ADLTIVCENK…LYSGQTCITS (69 aa). 3 disordered regions span residues 188 to 276, 331 to 365, and 471 to 491; these read AAEC…TINP, LSDG…DNQP, and DHPE…AGSN. Composition is skewed to basic and acidic residues over residues 190 to 200 and 207 to 216; these read ECERSGGHNNK and CTHKDNKSDK. The span at 223-234 shows a compositional bias: polar residues; it reads NLSNAPPSGTSG. Over residues 235–247 the composition is skewed to low complexity; the sequence is SNSNISTSSNHQQ. Residues 248–258 show a composition bias toward basic residues; the sequence is QQHHHHHHHNH. Over residues 259–275 the composition is skewed to low complexity; it reads NNNNNNNNNNSSSSTIN. Over residues 476–490 the composition is skewed to low complexity; the sequence is RSGSASGSGANLAGS. 3 consecutive C2H2-type zinc fingers follow at residues 500 to 522, 528 to 551, and 567 to 590; these read YRCE…LRVH, FACR…CSVH, and YSCC…SGHH.

In terms of tissue distribution, expressed from stage 5 in two rather faint stripes at positions of 64% (anterior domain; AD) and 17% (posterior domain; PD) egg length. During early gastrulation, at stage 6, these two stripes become more evident and detectable at the region posterior to the cephalic furrow and in the hindgut primordium. The AD disappears as gastrulation proceeds, while the PD remains. At stage 15, the AD appears again in the foregut, and PD expression in the hindgut and anal pad. In imaginal disks, it is ubiquitously expressed in both males and females in genital and eye-antennal disks. Not expressed in the brain. In genital disks, it is expressed along the margin of the anterior bulbus in males, while in females it is expressed in the posterior compartment along the anterior-posterior border, with medial expansion in the most posterior region.

It localises to the nucleus. Transcription factor required for terminalia development. Negative regulator of the JAK/STAT pathway: represses JAK/STAT-dependent expression of ventral veins lacking (vvl) in the posterior spiracles. The chain is Transcription factor Ken (ken) from Drosophila melanogaster (Fruit fly).